A 118-amino-acid polypeptide reads, in one-letter code: Large ribosomal subunit protein bL20 (118 aa).

It belongs to the bacterial ribosomal protein bL20 family.

In terms of biological role, binds directly to 23S ribosomal RNA and is necessary for the in vitro assembly process of the 50S ribosomal subunit. It is not involved in the protein synthesizing functions of that subunit. This chain is Large ribosomal subunit protein bL20, found in Alteromonas mediterranea (strain DSM 17117 / CIP 110805 / LMG 28347 / Deep ecotype).